A 412-amino-acid polypeptide reads, in one-letter code: cAMP-dependent protein kinase regulatory subunit (412 aa).

The interval 1 to 142 is dimerization and phosphorylation; sequence MSFEEVYEEL…RLKRSVAGNF (142 aa). Residues 101–105 carry the Pseudophosphorylation motif motif; sequence RRQSV. Serine 104 carries the post-translational modification Phosphoserine. Residues 143-277, glutamate 224, arginine 233, 278-412, glutamate 344, and arginine 353 each bind 3',5'-cyclic AMP; these read LFKN…EEVP and ILSS…STKA. The interval 392-412 is disordered; sequence MGMDNEYGDQSLHRSPPSTKA.

Belongs to the cAMP-dependent kinase regulatory chain family. As to quaternary structure, tetramer, composed of 2 regulatory (R) and 2 catalytic (C) subunits. In the presence of cAMP it dissociates into 2 active monomeric C subunits and an R dimer.

In Schizosaccharomyces pombe (strain 972 / ATCC 24843) (Fission yeast), this protein is cAMP-dependent protein kinase regulatory subunit (cgs1).